A 445-amino-acid polypeptide reads, in one-letter code: MVAIVEVKAREILDSRGNPTVEVDLKTEQGCFRAAVPSGASTGIYEALELRDGDKTRYNGKGVLKAVENVNKVLAPALVGKDCREQAALDRLMVEELDGSKNEWGWSKSVLGANAILAVSMALCRAGAAAKGIPLYKYVAQLAGHEAPEFVLPVPCFNVLNGGKHAGNSLAMQEFMVAPVGARSFGEALRMGAEVYQALQRLLKAKFGLAATNVGDEGGFAPDIKDPREALGLLVEAIRAAGHEGKVKIMADVAASEFYSKEAKSYDLDFKSPAADAHRLLTGDQLKDLFKEWSEEFPIVSIEDPFDQDDFSSYAALTAEIGSKVQVVGDDLLVTNPARIRKALQHKACNALLLKVNQIGSITEAIEACKLAQASGWGVMVSHRSGETEDSFIADLVVGLRTGQIKTGAPCRSERLCKYNQLLRIEEQLQGRCTYAGENFRNPSN.

Substrate is bound by residues H165 and E174. E217 (proton donor) is an active-site residue. Mg(2+) contacts are provided by D252, E303, and D330. Substrate contacts are provided by E303 and D330. K355 functions as the Proton acceptor in the catalytic mechanism. Substrate contacts are provided by residues 382–385 and K406; that span reads SHRS.

It belongs to the enolase family. In terms of assembly, homodimer. Requires Mg(2+) as cofactor.

Its subcellular location is the cytoplasm. The catalysed reaction is (2R)-2-phosphoglycerate = phosphoenolpyruvate + H2O. It participates in carbohydrate degradation; glycolysis; pyruvate from D-glyceraldehyde 3-phosphate: step 4/5. In Eimeria tenella (Coccidian parasite), this protein is Enolase (ENO).